The sequence spans 60 residues: Large ribosomal subunit protein uL30 (60 aa).

Belongs to the universal ribosomal protein uL30 family. Part of the 50S ribosomal subunit.

The polypeptide is Large ribosomal subunit protein uL30 (Nocardioides sp. (strain ATCC BAA-499 / JS614)).